Consider the following 167-residue polypeptide: UPF0114 protein in repA1-repA2 intergenic region (167 aa).

3 helical membrane passes run 15-35, 53-73, and 136-156; these read LMFP…LKFF, LVLA…LVMV, and IMLC…MAYI.

The protein belongs to the UPF0114 family.

It is found in the cell membrane. This is UPF0114 protein in repA1-repA2 intergenic region from Buchnera aphidicola subsp. Schizaphis graminum (strain Sg).